Here is a 357-residue protein sequence, read N- to C-terminus: Acyl-coenzyme A:6-aminopenicillanic-acid-acyltransferase 40 kDa form (357 aa).

The 6-aminopenicillanate site is built by Asp-121 and Arg-310.

It belongs to the peptidase C45 family. As to quaternary structure, the active form of the enzyme results from processing of the 40-kDa monomeric precursor to a heterodimer containing subunits of 11 and 29 kDa. Post-translationally, the pre-AAT protein is synthesized as 40 kDa precursor which is then self-processed into an 11 kDa (protein A) and a 29 kDa (protein B). The B protein carries AAT activity.

The protein localises to the peroxisome matrix. It carries out the reaction isopenicillin N + phenylacetyl-CoA + H2O = penicillin G + L-2-aminoadipate + CoA + H(+). It functions in the pathway antibiotic biosynthesis; penicillin G biosynthesis; penicillin G from L-alpha-aminoadipate and L-cysteine and L-valine: step 3/3. Its function is as follows. Nonribosomal peptide synthetase; part of the gene cluster that mediates the biosynthesis of penicillin, the world's most important antibiotic. AatA catalyzes the exchange of the alpha-aminoadipyl side chain of isopenicillin N for phenylacetic acid to yield penicillin. This step occurs in the peroxisomal matrix and the penM and paaT transporters are involved in the isopenicillin N and phenylacetic acid import into the peroxisome, respectively. The penicillin biosynthesis occurs via 3 enzymatic steps, the first corresponding to the production of the tripeptide N-[(5S)-5-amino-5-carboxypentanoyl]-L-cysteinyl-D-valine (LLD-ACV or ACV) by the NRPS acvA. The tripeptide ACV is then cyclized to isopenicillin N (IPN) by the isopenicillin N synthase ipnA that forms the beta-lactam nucleus. Finally, the alpha-aminoadipyl side chain is exchanged for phenylacetic acid by the isopenicillin N acyltransferase penDE to yield penicillin in the peroxisomal matrix. This Emericella nidulans (strain FGSC A4 / ATCC 38163 / CBS 112.46 / NRRL 194 / M139) (Aspergillus nidulans) protein is Acyl-coenzyme A:6-aminopenicillanic-acid-acyltransferase 40 kDa form.